Consider the following 176-residue polypeptide: Ferritin, middle subunit (176 aa).

In terms of domain architecture, Ferritin-like diiron spans 7–156 (QNYHRDCEAA…DFITNLSRMD (150 aa)). 5 residues coordinate Fe cation: E24, E59, H62, E104, and Q138.

Belongs to the ferritin family. In terms of assembly, in liver, forms a heteromer consisting of middle and heavy subunits. In spleen, forms a homomer. The functional molecule forms a roughly spherical shell with a diameter of 12 nm and contains a central cavity into which the insoluble mineral iron core is deposited. As to expression, liver and spleen (at protein level).

The enzyme catalyses 4 Fe(2+) + O2 + 4 H(+) = 4 Fe(3+) + 2 H2O. In terms of biological role, stores iron in a soluble, non-toxic, readily available form. Important for iron homeostasis. Has ferroxidase activity. Iron is taken up in the ferrous form and deposited as ferric hydroxides after oxidation. The polypeptide is Ferritin, middle subunit (Trematomus newnesi (Dusky notothen)).